The chain runs to 394 residues: Probable 6-phosphogluconolactonase ARB_02015 (394 aa).

The first 21 residues, 1–21 (MKTVPFLSLLQAGILTSGIVA), serve as a signal peptide directing secretion. A glycan (N-linked (GlcNAc...) asparagine) is linked at N51.

The protein belongs to the cycloisomerase 2 family.

It is found in the secreted. The enzyme catalyses 6-phospho-D-glucono-1,5-lactone + H2O = 6-phospho-D-gluconate + H(+). The protein operates within carbohydrate degradation; pentose phosphate pathway; D-ribulose 5-phosphate from D-glucose 6-phosphate (oxidative stage): step 2/3. Its function is as follows. Catalyzes the hydrolysis of 6-phosphogluconolactone to 6-phosphogluconate. In Arthroderma benhamiae (strain ATCC MYA-4681 / CBS 112371) (Trichophyton mentagrophytes), this protein is Probable 6-phosphogluconolactonase ARB_02015.